The chain runs to 261 residues: Phosphate import ATP-binding protein PstB (261 aa).

The region spanning 15–256 is the ABC transporter domain; the sequence is LQVRRLNFYY…PAHQETENYI (242 aa). An ATP-binding site is contributed by 47–54; it reads GPSGCGKS.

The protein belongs to the ABC transporter superfamily. Phosphate importer (TC 3.A.1.7) family. The complex is composed of two ATP-binding proteins (PstB), two transmembrane proteins (PstC and PstA) and a solute-binding protein (PstS).

The protein resides in the cell inner membrane. The enzyme catalyses phosphate(out) + ATP + H2O = ADP + 2 phosphate(in) + H(+). Its function is as follows. Part of the ABC transporter complex PstSACB involved in phosphate import. Responsible for energy coupling to the transport system. The sequence is that of Phosphate import ATP-binding protein PstB from Burkholderia sp.